Consider the following 700-residue polypeptide: Elongation factor G 1 (700 aa).

In terms of domain architecture, tr-type G spans 8–290 (QNYRNIGISA…AVIEFMPSPI (283 aa)). Residues 17 to 24 (AHIDAGKT), 88 to 92 (DTPGH), and 142 to 145 (NKMD) contribute to the GTP site.

The protein belongs to the TRAFAC class translation factor GTPase superfamily. Classic translation factor GTPase family. EF-G/EF-2 subfamily.

Its subcellular location is the cytoplasm. Functionally, catalyzes the GTP-dependent ribosomal translocation step during translation elongation. During this step, the ribosome changes from the pre-translocational (PRE) to the post-translocational (POST) state as the newly formed A-site-bound peptidyl-tRNA and P-site-bound deacylated tRNA move to the P and E sites, respectively. Catalyzes the coordinated movement of the two tRNA molecules, the mRNA and conformational changes in the ribosome. The chain is Elongation factor G 1 from Polaromonas sp. (strain JS666 / ATCC BAA-500).